Here is a 510-residue protein sequence, read N- to C-terminus: Inositol-3-phosphate synthase (510 aa).

NAD(+) contacts are provided by Gly70, Gly71, Asn72, Asn73, Asp143, Ile180, Gln190, Arg193, Thr230, Ala231, Asn232, Thr233, Gly281, Ser282, Asp306, Ser309, Asn340, Asn341, Asp342, Lys355, Gly393, Asp394, Asp422, and Ser423.

This sequence belongs to the myo-inositol 1-phosphate synthase family. NAD(+) serves as cofactor.

The protein resides in the cytoplasm. It localises to the cytosol. The protein localises to the nucleus. The catalysed reaction is D-glucose 6-phosphate = 1D-myo-inositol 3-phosphate. The protein operates within polyol metabolism; myo-inositol biosynthesis; myo-inositol from D-glucose 6-phosphate: step 1/2. Its function is as follows. Key enzyme in myo-inositol biosynthesis pathway that catalyzes the conversion of glucose 6-phosphate to 1-myo-inositol 1-phosphate in a NAD-dependent manner. The chain is Inositol-3-phosphate synthase (TUR1) from Spirodela polyrhiza (Giant duckweed).